A 97-amino-acid polypeptide reads, in one-letter code: MKFFAIAALFAAAAVAQPLEDRSNGNGNVCPPGLFSNPQCCATQVLGLIGLDCKVPSQNVYDGTDFRNVCAKTGAQPLCCVAPVAGQALLCQTAVGA.

Residues 1–16 (MKFFAIAALFAAAAVA) form the signal peptide. The propeptide occupies 17 to 22 (QPLEDR). 4 cysteine pairs are disulfide-bonded: C30–C79, C40–C70, C41–C53, and C80–C91.

This sequence belongs to the cerato-ulmin hydrophobin family. As to quaternary structure, homotetramer. Further self-assembles to form highly ordered films at water-air interfaces through intermolecular interactions.

The protein localises to the secreted. It is found in the cell wall. In terms of biological role, aerial growth, conidiation, and dispersal of filamentous fungi in the environment rely upon a capability of their secreting small amphipathic proteins called hydrophobins (HPBs) with low sequence identity. Class I can self-assemble into an outermost layer of rodlet bundles on aerial cell surfaces, conferring cellular hydrophobicity that supports fungal growth, development and dispersal; whereas Class II form highly ordered films at water-air interfaces through intermolecular interactions but contribute nothing to the rodlet structure. Hbf1 is a class II hydrophobin that has a role in hyphal development and is in particular required for the formation of aerial hyphae. The chain is Class II hydrophobin 1 from Hypocrea jecorina (Trichoderma reesei).